Here is an 89-residue protein sequence, read N- to C-terminus: Small ribosomal subunit protein uS19 (89 aa).

The protein belongs to the universal ribosomal protein uS19 family.

Its function is as follows. Protein S19 forms a complex with S13 that binds strongly to the 16S ribosomal RNA. In Akkermansia muciniphila (strain ATCC BAA-835 / DSM 22959 / JCM 33894 / BCRC 81048 / CCUG 64013 / CIP 107961 / Muc), this protein is Small ribosomal subunit protein uS19.